Here is a 94-residue protein sequence, read N- to C-terminus: Co-chaperonin GroES (94 aa).

This sequence belongs to the GroES chaperonin family. In terms of assembly, heptamer of 7 subunits arranged in a ring. Interacts with the chaperonin GroEL.

The protein localises to the cytoplasm. Together with the chaperonin GroEL, plays an essential role in assisting protein folding. The GroEL-GroES system forms a nano-cage that allows encapsulation of the non-native substrate proteins and provides a physical environment optimized to promote and accelerate protein folding. GroES binds to the apical surface of the GroEL ring, thereby capping the opening of the GroEL channel. This Brevibacillus choshinensis protein is Co-chaperonin GroES.